The primary structure comprises 56 residues: Alpha-conotoxin TxIA (56 aa).

Positions 1–16 (MFTVFLLVVLATAVVS) are cleaved as a signal peptide. The propeptide occupies 17-39 (FTSDRASDDGKAAASDLITLTIK). Cystine bridges form between cysteine 41–cysteine 47 and cysteine 42–cysteine 55. Positions 43–45 (SRP) are ser-Xaa-Pro motif, crucial for potent interaction with nAChR. Proline 45 and proline 46 each carry 4-hydroxyproline; partial. Cysteine 55 is subject to Cysteine amide.

It belongs to the conotoxin A superfamily. Exists in 4 different forms, depending on hydroxylations. Tx1a-PP does not contain hydroxyproline, tx1a-OP has one hydroxyproline at position 45, tx1a-PO has one hydroxyproline at position 46, and tx1a-PP has two hydroxyprolines at positions 45 and 46. In terms of tissue distribution, expressed by the venom duct. Tx1a that containing 1 or 2 non-hydroxylated prolines are mostly present in part 5 of the venom duct (distal part near the pharynx), whereas tx1a-OO (with 2 hydroxyprolines) is mostly present in part 4 of the venom duct (follewed by part 3).

It is found in the secreted. Alpha-conotoxins act on postsynaptic membranes, they bind to the nicotinic acetylcholine receptors (nAChR) and thus inhibit them. This toxin inhibits rat alpha-3-beta-2/CHRNA3-CHRNB2 (IC(50)=3.5 nM), rat alpha-7/CHRNA7 (IC(50)=392 nM) nAChR, and the L.stagnalis soluble acetylcholine receptor (all tested without hydroxyproline). This chain is Alpha-conotoxin TxIA, found in Conus textile (Cloth-of-gold cone).